The following is a 594-amino-acid chain: Laccase-2 (594 aa).

An N-terminal signal peptide occupies residues M1–S20. An N-linked (GlcNAc...) asparagine glycan is attached at N67. Plastocyanin-like domains follow at residues E70–N183 and D195–G357. Cu cation-binding residues include H117 and H119. N124 is a glycosylation site (N-linked (GlcNAc...) asparagine). A disulfide bond links C138 and C578. 2 residues coordinate Cu cation: H162 and H164. 8 N-linked (GlcNAc...) asparagine glycosylation sites follow: N242, N286, N320, N358, N397, N430, N452, and N458. The Plastocyanin-like 3 domain maps to P466–E563. Cu cation contacts are provided by H480, H483, and H485. The N-linked (GlcNAc...) asparagine glycan is linked to N508. 4 residues coordinate Cu cation: H543, C544, H545, and H549.

It belongs to the multicopper oxidase family. Requires Cu cation as cofactor.

Its subcellular location is the secreted. It is found in the cell wall. It catalyses the reaction 4 hydroquinone + O2 = 4 benzosemiquinone + 2 H2O. Laccase that catalyzes the oxidation of certain aromatic compounds, including L-dopa, to quinones, which then polymerize to melanin. Able to oxidize a wide variety of aromatic diphenol and diamino groups in the ortho, meta, and para positions but not monophenolic groups such as in phenol, tyramine, or tyrosine. Plays an important role in virulence. Plays a role in dissemination to extrapulmonary sites but is not involved in pulmonary growth or in elicitation of cellular immune responses in the lung. In Cryptococcus neoformans var. grubii serotype A (strain H99 / ATCC 208821 / CBS 10515 / FGSC 9487) (Filobasidiella neoformans var. grubii), this protein is Laccase-2 (LAC2).